We begin with the raw amino-acid sequence, 305 residues long: tRNA pseudouridine synthase B (305 aa).

Aspartate 48 functions as the Nucleophile in the catalytic mechanism.

This sequence belongs to the pseudouridine synthase TruB family. Type 1 subfamily.

It carries out the reaction uridine(55) in tRNA = pseudouridine(55) in tRNA. Responsible for synthesis of pseudouridine from uracil-55 in the psi GC loop of transfer RNAs. In Actinobacillus pleuropneumoniae serotype 5b (strain L20), this protein is tRNA pseudouridine synthase B.